Here is a 785-residue protein sequence, read N- to C-terminus: Proprotein convertase subtilisin/kexin type 7 (785 aa).

Positions 1–37 (MPKGRQKVPHLDAPLGLPTCLWLELAGLFLLVPWVMG) are cleaved as a signal peptide. Positions 38–141 (LAGTGGPDGQ…EQRLLRRAKR (104 aa)) are excised as a propeptide. Over 142 to 667 (SVHFNDPKYP…YTITPNTLKT (526 aa)) the chain is Extracellular. The 321-residue stretch at 153 to 473 (QWHLNNRRSP…FGLLNAWRLV (321 aa)) folds into the Peptidase S8 domain. N-linked (GlcNAc...) asparagine glycosylation is found at N167 and N175. The active-site Charge relay system is the D187. Positions 197–219 (IAPNYSPEGSYDLNSNDPDPMPH) are disordered. H228 serves as the catalytic Charge relay system. N241 carries N-linked (GlcNAc...) asparagine glycosylation. Catalysis depends on S406, which acts as the Charge relay system. Positions 481–618 (SVPYLASYVS…QLTLYGSVWS (138 aa)) constitute a P/Homo B domain. N511 is a glycosylation site (N-linked (GlcNAc...) asparagine). Residues 668–688 (LVLVGCFTVFWTVYYMLEVYL) form a helical membrane-spanning segment. Over 689–785 (SQRNVASNQV…VPHGKEEQIC (97 aa)) the chain is Cytoplasmic. The segment at 700-751 (RSGPCHWPHRSRKAKEEGTELESVPLCSSKDPDEVETESRGPPTTSDLLAPD) is disordered.

It belongs to the peptidase S8 family. Ca(2+) serves as cofactor. Post-translationally, cysteine residues in the cytoplasmic tail are probably palmitoylated. N-glycosylated. As to expression, expressed in spleen, thymus, prostate, testis, ovary, small intestine, colon and peripheral blood leukocyte.

It is found in the golgi apparatus. The protein resides in the trans-Golgi network membrane. Inhibited by zinc and copper. Serine endoprotease that processes various proproteins by cleavage at paired basic amino acids, recognizing the RXXX[KR]R consensus motif. Likely functions in the constitutive secretory pathway. The protein is Proprotein convertase subtilisin/kexin type 7 (PCSK7) of Homo sapiens (Human).